The sequence spans 2203 residues: Genome polyprotein (2203 aa).

G2 carries N-myristoyl glycine; by host lipidation. Residues 2 to 1513 (GAQVSTQKTG…HVSRAFICLQ (1512 aa)) lie on the Cytoplasmic side of the membrane. The tract at residues 567–583 (ELQNDVRQAVEGAIGRV) is amphipathic alpha-helix. Residues H890 and D908 each act as for protease 2A activity in the active site. Zn(2+) contacts are provided by C925 and C927. Catalysis depends on C979, which acts as the For protease 2A activity. C985 and H987 together coordinate Zn(2+). The membrane-binding stretch occupies residues 1119 to 1191 (SNGWLKKFTE…EQSAPSQSDQ (73 aa)). Positions 1119–1257 (SNGWLKKFTE…SPGAGKSVAT (139 aa)) are oligomerization. The segment at 1140–1144 (AVKIQ) is RNA-binding. The SF3 helicase domain occupies 1223–1379 (EKKMSNYIQF…SMYSQNGKIN (157 aa)). C1387, C1399, and C1404 together coordinate Zn(2+). The segment at 1387-1404 (CDEECCPVNFKRCCPLVC) adopts a C4-type; degenerate zinc-finger fold. The segment at 1431-1438 (EYNHRHSV) is RNA-binding. Residues 1442–1447 (LEALFQ) form an oligomerization region. An intramembrane segment occupies 1514 to 1529 (ALTTFVSVAGIIYIIY). The Cytoplasmic segment spans residues 1530–2203 (KLFAGFQGAY…TLRRKWLDSF (674 aa)). The residue at position 1539 (Y1539) is an O-(5'-phospho-RNA)-tyrosine. The 179-residue stretch at 1559 to 1737 (GPAFEFAVAM…FSAALLRHYF (179 aa)) folds into the Peptidase C3 domain. Catalysis depends on for protease 3C activity residues H1598, E1629, and C1705. The RdRp catalytic domain occupies 1968–2084 (GHLIAFDYSG…SYPWPIDASL (117 aa)). Residues D1974 and D2070 each contribute to the Mg(2+) site.

Belongs to the picornaviruses polyprotein family. Interacts with capsid protein VP1 and capsid protein VP3 to form heterotrimeric protomers. As to quaternary structure, interacts with capsid protein VP0, and capsid protein VP3 to form heterotrimeric protomers. Five protomers subsequently associate to form pentamers which serve as building blocks for the capsid. Interacts with capsid protein VP2, capsid protein VP3 and capsid protein VP4 following cleavage of capsid protein VP0. In terms of assembly, interacts with capsid protein VP1 and capsid protein VP3 in the mature capsid. Interacts with capsid protein VP0 and capsid protein VP1 to form heterotrimeric protomers. Five protomers subsequently associate to form pentamers which serve as building blocks for the capsid. Interacts with capsid protein VP4 in the mature capsid. Interacts with protein 2C; this interaction may be important for virion morphogenesis. As to quaternary structure, interacts with capsid protein VP1 and capsid protein VP3. In terms of assembly, homodimer. Homohexamer; forms a hexameric ring structure with 6-fold symmetry characteristic of AAA+ ATPases. Interacts (via N-terminus) with host RTN3 (via reticulon domain); this interaction is important for viral replication. Interacts with capsid protein VP3; this interaction may be important for virion morphogenesis. As to quaternary structure, interacts with protein 3CD. In terms of assembly, homodimer. Interacts with host GBF1. Interacts (via GOLD domain) with host ACBD3 (via GOLD domain); this interaction allows the formation of a viral protein 3A/ACBD3 heterotetramer with a 2:2 stoichiometry, which will stimulate the recruitment of host PI4KB in order to synthesize PI4P at the viral RNA replication sites. Interacts with RNA-directed RNA polymerase. As to quaternary structure, interacts with protein 3AB and with RNA-directed RNA polymerase. In terms of assembly, interacts with Viral protein genome-linked and with protein 3CD. The cofactor is Mg(2+). Specific enzymatic cleavages in vivo by the viral proteases yield processing intermediates and the mature proteins. Post-translationally, myristoylation is required for the formation of pentamers during virus assembly. Further assembly of 12 pentamers and a molecule of genomic RNA generates the provirion. In terms of processing, during virion maturation, immature virions are rendered infectious following cleavage of VP0 into VP4 and VP2. This maturation seems to be an autocatalytic event triggered by the presence of RNA in the capsid and it is followed by a conformational change infectious virion. Myristoylation is required during RNA encapsidation and formation of the mature virus particle. Post-translationally, VPg is uridylylated by the polymerase into VPg-pUpU. This acts as a nucleotide-peptide primer for the genomic RNA replication.

It is found in the virion. It localises to the host cytoplasm. The protein localises to the host cytoplasmic vesicle membrane. Its subcellular location is the host nucleus. It carries out the reaction a ribonucleoside 5'-triphosphate + H2O = a ribonucleoside 5'-diphosphate + phosphate + H(+). The catalysed reaction is Selective cleavage of Tyr-|-Gly bond in the picornavirus polyprotein.. It catalyses the reaction RNA(n) + a ribonucleoside 5'-triphosphate = RNA(n+1) + diphosphate. The enzyme catalyses Selective cleavage of Gln-|-Gly bond in the poliovirus polyprotein. In other picornavirus reactions Glu may be substituted for Gln, and Ser or Thr for Gly.. Replication or transcription is subject to high level of random mutations by the nucleotide analog ribavirin. Its function is as follows. Forms an icosahedral capsid of pseudo T=3 symmetry with capsid proteins VP2 and VP3. The capsid is 300 Angstroms in diameter, composed of 60 copies of each capsid protein and enclosing the viral positive strand RNA genome. Capsid protein VP1 mainly forms the vertices of the capsid. Capsid protein VP1 interacts with host cell receptor to provide virion attachment to target host cells. This attachment induces virion internalization. Tyrosine kinases are probably involved in the entry process. After binding to its receptor, the capsid undergoes conformational changes. Capsid protein VP1 N-terminus (that contains an amphipathic alpha-helix) and capsid protein VP4 are externalized. Together, they shape a pore in the host membrane through which viral genome is translocated to host cell cytoplasm. Functionally, forms an icosahedral capsid of pseudo T=3 symmetry with capsid proteins VP2 and VP3. The capsid is 300 Angstroms in diameter, composed of 60 copies of each capsid protein and enclosing the viral positive strand RNA genome. Lies on the inner surface of the capsid shell. After binding to the host receptor, the capsid undergoes conformational changes. Capsid protein VP4 is released, Capsid protein VP1 N-terminus is externalized, and together, they shape a pore in the host membrane through which the viral genome is translocated into the host cell cytoplasm. In terms of biological role, component of immature procapsids, which is cleaved into capsid proteins VP4 and VP2 after maturation. Allows the capsid to remain inactive before the maturation step. Its function is as follows. Cysteine protease that cleaves viral polyprotein and specific host proteins. It is responsible for the autocatalytic cleavage between the P1 and P2 regions, which is the first cleavage occurring in the polyprotein. Also cleaves the host translation initiation factor EIF4G1, in order to shut down the capped cellular mRNA translation. Inhibits the host nucleus-cytoplasm protein and RNA trafficking by cleaving host members of the nuclear pores. Counteracts stress granule formation probably by antagonizing its assembly or promoting its dissassembly. Functionally, plays an essential role in the virus replication cycle by acting as a viroporin. Creates a pore in the host endoplasmic reticulum and as a consequence releases Ca2+ in the cytoplasm of infected cell. In turn, high levels of cytoplasmic calcium may trigger membrane trafficking and transport of viral ER-associated proteins to viroplasms, sites of viral genome replication. Induces and associates with structural rearrangements of intracellular membranes. Displays RNA-binding, nucleotide binding and NTPase activities. May play a role in virion morphogenesis and viral RNA encapsidation by interacting with the capsid protein VP3. In terms of biological role, localizes the viral replication complex to the surface of membranous vesicles. Together with protein 3CD binds the Cis-Active RNA Element (CRE) which is involved in RNA synthesis initiation. Acts as a cofactor to stimulate the activity of 3D polymerase, maybe through a nucleid acid chaperone activity. Its function is as follows. Localizes the viral replication complex to the surface of membranous vesicles. It inhibits host cell endoplasmic reticulum-to-Golgi apparatus transport and causes the disassembly of the Golgi complex, possibly through GBF1 interaction. This would result in depletion of MHC, trail receptors and IFN receptors at the host cell surface. Plays an essential role in viral RNA replication by recruiting ACBD3 and PI4KB at the viral replication sites, thereby allowing the formation of the rearranged membranous structures where viral replication takes place. Functionally, acts as a primer for viral RNA replication and remains covalently bound to viral genomic RNA. VPg is uridylylated prior to priming replication into VPg-pUpU. The oriI viral genomic sequence may act as a template for this. The VPg-pUpU is then used as primer on the genomic RNA poly(A) by the RNA-dependent RNA polymerase to replicate the viral genome. During genome replication, the VPg-RNA linkage is removed by the host TDP2, thereby accelerating replication. During the late stage of the replication cycle, host TDP2 is excluded from sites of viral RNA synthesis and encapsidation, allowing for the generation of progeny virions. Involved in the viral replication complex and viral polypeptide maturation. It exhibits protease activity with a specificity and catalytic efficiency that is different from protease 3C. Protein 3CD lacks polymerase activity. Protein 3CD binds to the 5'UTR of the viral genome. In terms of biological role, replicates the viral genomic RNA on the surface of intracellular membranes. May form linear arrays of subunits that propagate along a strong head-to-tail interaction called interface-I. Covalently attaches UMP to a tyrosine of VPg, which is used to prime RNA synthesis. The positive stranded RNA genome is first replicated at virus induced membranous vesicles, creating a dsRNA genomic replication form. This dsRNA is then used as template to synthesize positive stranded RNA genomes. ss(+)RNA genomes are either translated, replicated or encapsidated. Its function is as follows. Major viral protease that mediates proteolytic processing of the polyprotein. Cleaves host EIF5B, contributing to host translation shutoff. Also cleaves host PABPC1, contributing to host translation shutoff. Cleaves host NLRP1, triggers host N-glycine-mediated degradation of the autoinhibitory NLRP1 N-terminal fragment. This chain is Genome polyprotein, found in Echovirus 9 (strain Barty).